The sequence spans 552 residues: Lysine--tRNA ligase (552 aa).

A 'HIGH' region motif is present at residues 72 to 80; sequence PSGLPHLGT. The short motif at 320–324 is the 'KMSKS' region element; sequence KISKS. Residue Lys-323 coordinates ATP.

This sequence belongs to the class-I aminoacyl-tRNA synthetase family.

It localises to the cytoplasm. It catalyses the reaction tRNA(Lys) + L-lysine + ATP = L-lysyl-tRNA(Lys) + AMP + diphosphate. This is Lysine--tRNA ligase from Caulobacter vibrioides (strain ATCC 19089 / CIP 103742 / CB 15) (Caulobacter crescentus).